A 77-amino-acid polypeptide reads, in one-letter code: uncharacterized protein (77 aa).

This is an uncharacterized protein from Xylella fastidiosa (strain 9a5c).